Consider the following 385-residue polypeptide: tRNA (guanine-N(7)-)-methyltransferase non-catalytic subunit wuho (385 aa).

WD repeat units follow at residues Lys-68–Leu-108, Gly-155–Ser-194, and Gly-198–His-236.

It belongs to the WD repeat TRM82 family. In terms of assembly, forms a heterodimer with the catalytic subunit Mettl1. Interacts with mei-P26 and weakly interacts with bgcn; required for the function or formation of the mei-P26-bgcn-bam-sxl complex. Interacts with nanos; may be involved in mei-P26-dependent derepression of the BMP signaling pathway. Interacts with Myc; the interaction may be mediated by mei-P26 and may be involved in the regulation of ribosome biogenesis. As to expression, in testis, it is present at high level in hub cells, a niche for germline stem cells of testis. Ubiquitously expressed in all testicular cells throughout spermatogenesis. Ubiquitously expressed in all germline and somatic cells of the ovary.

Its subcellular location is the nucleus. The protein localises to the cytoplasm. It functions in the pathway tRNA modification; N(7)-methylguanine-tRNA biosynthesis. In terms of biological role, required for the Mettl1-dependent formation of N(7)-methylguanine at position 46 (m7G46) in tRNA. In the Mettl1-wuho methyltransferase complex, it is required to stabilize and induce conformational changes of the catalytic subunit. Required for binding of nanos mRNA and repression of translation by the mei-P26-bgcn-bam-sxl complex. May cooperate with mei-P26 and nanos to derepress the BMP signaling pathway. May cooperate with mei-P26 to suppress expression of a subset of microRNAs. May cooperate with mei-P26 to regulate bam expression levels in germline cells during gametogenesis. Required to promote mitosis to meiosis transition during gametogenesis. May regulate germline cell division in part by regulating ribosome biogenesis. In Drosophila grimshawi (Hawaiian fruit fly), this protein is tRNA (guanine-N(7)-)-methyltransferase non-catalytic subunit wuho.